The primary structure comprises 483 residues: ATP-dependent RNA helicase DDX25 (483 aa).

Residues 61–74 (LAANSLLNKLIRQS) carry the Nuclear export signal motif. A Q motif motif is present at residues 97-125 (KTFEELRLKEELLKGIYAMGFNRPSKIQE). A Nuclear localization signal motif is present at residues 100–114 (EELRLKEELLKGIYA). Residues 130–300 (MMLAHPPQNL…ERIIPDPNVI (171 aa)) enclose the Helicase ATP-binding domain. 143-150 (SQSGTGKT) contributes to the ATP binding site. The DEAD box motif lies at 247–250 (DEAD). One can recognise a Helicase C-terminal domain in the interval 311–478 (NIRQYYVLCG…QLDPEDMDEI (168 aa)).

This sequence belongs to the DEAD box helicase family. Phosphorylated on threonine residues. The phosphorylated form is found in the cytoplasm but not in the nucleus.

Its subcellular location is the cytoplasm. The protein localises to the nucleus. The enzyme catalyses ATP + H2O = ADP + phosphate + H(+). ATP-dependent RNA helicase. Required for mRNA export and translation regulation during spermatid development. This chain is ATP-dependent RNA helicase DDX25 (DDX25), found in Bos taurus (Bovine).